The following is a 69-amino-acid chain: Alpha-elapitoxin-Lc2c (69 aa).

Cystine bridges form between Cys-3–Cys-20, Cys-13–Cys-41, Cys-45–Cys-56, and Cys-57–Cys-62.

It belongs to the three-finger toxin family. Long-chain subfamily. Type II alpha-neurotoxin sub-subfamily. Expressed by the venom gland.

The protein localises to the secreted. Functionally, binds with high affinity to muscular nicotinic acetylcholine receptors (nAChRs), whereas it binds with a low affinity to neuronal alpha-7/CHRNA7 nAChRs. In Laticauda colubrina (Yellow-lipped sea krait), this protein is Alpha-elapitoxin-Lc2c.